Reading from the N-terminus, the 982-residue chain is Mitochondrial DNA mismatch repair protein mutS homolog (982 aa).

698-705 is a binding site for ATP; that stretch reads SVNGAGKS. Residues 905-951 enclose the HNH domain; sequence CEICGAPADAVHHIKPKSEHKKLCNRKLNRRSNLVPVCSSCHLDIHR.

Belongs to the DNA mismatch repair MutS family.

The protein resides in the mitochondrion. Functionally, may be involved in DNA-mismatch repair. The polypeptide is Mitochondrial DNA mismatch repair protein mutS homolog (Sarcophyton glaucum (Toadstool umbrella leather coral)).